The chain runs to 518 residues: Cytochrome P450 monooxygenase psoD (518 aa).

Cys442 contacts heme.

This sequence belongs to the cytochrome P450 family. The cofactor is heme.

It participates in secondary metabolite biosynthesis. Cytochrome P450 monooxygenase; part of the gene cluster that mediates the biosynthesis of pseurotin A, a competitive inhibitor of chitin synthase and an inducer of nerve-cell proliferation. The PKS-NRPS hybrid synthetase psoA is responsible for the biosynthesis of azaspirene, one of the first intermediates having the 1-oxa-7-azaspiro[4,4]-non-2-ene-4,6-dione core of pseurotin, via condensation of one acetyl-CoA, 4 malonyl-CoA, and a L-phenylalanine molecule. The dual-functional monooxygenase/methyltransferase psoF seems to be involved in the addition of the C3 methyl group onto the pseurotin scaffold. Azaspirene is then converted to synerazol through 4 steps including oxidation of C17 by the cytochrome P450 monooxygenase psoD, O-methylation of the hydroxy group of C8 by the methyltransferase psoC, and the trans-to-cis isomerization of the C13 olefin by the glutathione S-transferase psoE. The fourth step of synerazol production is performed by the dual-functional monooxygenase/methyltransferase psoF which seems to catalyze the epoxidation of the intermediate deepoxy-synerazol. Synerazol can be attacked by a water molecule nonenzymatically at two different positions to yield two diol products, pseurotin A and pseurotin D. The sequence is that of Cytochrome P450 monooxygenase psoD from Aspergillus fumigatus (strain ATCC MYA-4609 / CBS 101355 / FGSC A1100 / Af293) (Neosartorya fumigata).